Here is a 155-residue protein sequence, read N- to C-terminus: Chaperone protein IpgC (155 aa).

This sequence belongs to the LcrH/SycD chaperone family.

Its subcellular location is the cytoplasm. In terms of biological role, assists the correct folding of nascent IpaB. Once it is bound to IpaB, it binds to IpaC and impedes their premature association that would lead to their degradation in the absence of IpcG. The polypeptide is Chaperone protein IpgC (ipgC) (Shigella dysenteriae).